A 1420-amino-acid polypeptide reads, in one-letter code: Mediator of RNA polymerase II transcription subunit 13 (1420 aa).

3 positions are modified to phosphoserine: S370, S375, and S425. The segment covering 416–427 (TTVSNDLENSPL) has biased composition (polar residues). Residues 416 to 511 (TTVSNDLENS…TNESNKSISD (96 aa)) form a disordered region. The segment covering 429–439 (TELEANGRSLE) has biased composition (basic and acidic residues). The segment covering 440–453 (KVNNSVSKTGSVDT) has biased composition (polar residues). Residues 454 to 484 (LHNKEGTLEQREQNENLPSDKSDSMVDKELF) show a composition bias toward basic and acidic residues. Residues 494 to 508 (GDSNKSNSTNESNKS) are compositionally biased toward low complexity. Phosphothreonine is present on T601. S608 is modified (phosphoserine; by PKA). Position 636 is a phosphoserine (S636). The tract at residues 653-691 (LSSSEEEEDEEENGSSDEDLKSLNVRDDMKPSDNISTNT) is disordered. The segment covering 655 to 669 (SSEEEEDEEENGSSD) has biased composition (acidic residues). The span at 670–683 (EDLKSLNVRDDMKP) shows a compositional bias: basic and acidic residues. S748 carries the phosphoserine modification.

This sequence belongs to the Mediator complex subunit 13 family. Component of the SRB8-11 complex which consists of SRB8, SSN2/SRB9, SSN3/SRB10 and SSN8/SRB11. The SRB8-11 complex associates with the Mediator complex. The SSN3/SRB10 and SSN8/SRB11 kinase-cyclin pair also associate with the RNA polymerase II holoenzyme. In terms of processing, phosphorylated. PKA-dependent phosphorylation at 'Ser-608' is enhanced by activation of the RAS signaling pathway.

The protein localises to the nucleus. In terms of biological role, component of the SRB8-11 complex. The SRB8-11 complex is a regulatory module of the Mediator complex which is itself involved in regulation of basal and activated RNA polymerase II-dependent transcription. The SRB8-11 complex may be involved in the transcriptional repression of a subset of genes regulated by Mediator. It may inhibit the association of the Mediator complex with RNA polymerase II to form the holoenzyme complex. The SRB8-11 complex phosphorylates the C-terminal domain (CTD) of the largest subunit of RNA polymerase II RPB1 at serines 2 and 5. In Saccharomyces cerevisiae (strain ATCC 204508 / S288c) (Baker's yeast), this protein is Mediator of RNA polymerase II transcription subunit 13 (SSN2).